Consider the following 509-residue polypeptide: Methylthioalkylmalate synthase 1-1, chloroplastic (509 aa).

Residues 1 to 55 constitute a chloroplast transit peptide; the sequence is MSFSPTYSIVMASPLLTSSQMIPTTGSTVGFRSILPFGSLRLTRPYKKTSLFISY. The region spanning 91 to 365 is the Pyruvate carboxyltransferase domain; sequence VRVYDTTLRD…YTRIDTRQIM (275 aa). 3 residues coordinate Mn(2+): Asp-100, His-298, and His-300.

Belongs to the alpha-IPM synthase/homocitrate synthase family. In terms of assembly, monomer. Mn(2+) serves as cofactor. The cofactor is Co(2+).

Its subcellular location is the plastid. It is found in the chloroplast. The catalysed reaction is 4-methylsulfanyl-2-oxobutanoate + acetyl-CoA + H2O = 2-(2-methylsulfanyl)ethylmalate + CoA + H(+). It participates in secondary metabolite biosynthesis. With respect to regulation, inhibited by EDTA, Cu(2+) and Zn(2+). Its function is as follows. Determines the side chain length of aliphatic glucosinolate structures. Involved in the biosynthesis of glucosinolate derivative natural products such as 6-(methylsulfinyl)hexylisothiocyanate (6-MSITC), a compound found in wasabi with diverse health-promoting properties. Catalyzes the conversion of 4-methylsulfanyl-2-oxobutanoate (4-MTOB) into 2-(2-methylsulfanyl)ethylmalate (2-(2-MT)EM). The protein is Methylthioalkylmalate synthase 1-1, chloroplastic of Eutrema japonicum (Wasabi plant).